We begin with the raw amino-acid sequence, 189 residues long: Imidazoleglycerol-phosphate dehydratase (189 aa).

It belongs to the imidazoleglycerol-phosphate dehydratase family.

The protein localises to the cytoplasm. The catalysed reaction is D-erythro-1-(imidazol-4-yl)glycerol 3-phosphate = 3-(imidazol-4-yl)-2-oxopropyl phosphate + H2O. It participates in amino-acid biosynthesis; L-histidine biosynthesis; L-histidine from 5-phospho-alpha-D-ribose 1-diphosphate: step 6/9. This Nautilia profundicola (strain ATCC BAA-1463 / DSM 18972 / AmH) protein is Imidazoleglycerol-phosphate dehydratase.